A 75-amino-acid polypeptide reads, in one-letter code: ATP synthase subunit c (75 aa).

2 helical membrane-spanning segments follow: residues 4–24 and 54–74; these read GLIAIGIGISMISGLGVGLGQ and AVAESAAIYALVISILLMFAF.

It belongs to the ATPase C chain family. F-type ATPases have 2 components, F(1) - the catalytic core - and F(0) - the membrane proton channel. F(1) has five subunits: alpha(3), beta(3), gamma(1), delta(1), epsilon(1). F(0) has three main subunits: a(1), b(2) and c(10-14). The alpha and beta chains form an alternating ring which encloses part of the gamma chain. F(1) is attached to F(0) by a central stalk formed by the gamma and epsilon chains, while a peripheral stalk is formed by the delta and b chains.

It is found in the cell membrane. In terms of biological role, f(1)F(0) ATP synthase produces ATP from ADP in the presence of a proton or sodium gradient. F-type ATPases consist of two structural domains, F(1) containing the extramembraneous catalytic core and F(0) containing the membrane proton channel, linked together by a central stalk and a peripheral stalk. During catalysis, ATP synthesis in the catalytic domain of F(1) is coupled via a rotary mechanism of the central stalk subunits to proton translocation. Functionally, key component of the F(0) channel; it plays a direct role in translocation across the membrane. A homomeric c-ring of between 10-14 subunits forms the central stalk rotor element with the F(1) delta and epsilon subunits. The sequence is that of ATP synthase subunit c from Mycoplasmopsis agalactiae (strain NCTC 10123 / CIP 59.7 / PG2) (Mycoplasma agalactiae).